Consider the following 237-residue polypeptide: Probable F-box protein At1g53815 (237 aa).

Residues 41-72 (ISNILSRLPLKSKAKCRCVSKLWSSIIRRPNY) form the F-box domain.

The chain is Probable F-box protein At1g53815 from Arabidopsis thaliana (Mouse-ear cress).